The chain runs to 304 residues: Acetyl-coenzyme A carboxylase carboxyl transferase subunit beta (304 aa).

Residues 25-294 form the CoA carboxyltransferase N-terminal domain; sequence LWIKCPETGE…KAVKRDTATE (270 aa).

The protein belongs to the AccD/PCCB family. In terms of assembly, acetyl-CoA carboxylase is a heterohexamer composed of biotin carboxyl carrier protein (AccB), biotin carboxylase (AccC) and two subunits each of ACCase subunit alpha (AccA) and ACCase subunit beta (AccD).

The protein localises to the cytoplasm. The catalysed reaction is N(6)-carboxybiotinyl-L-lysyl-[protein] + acetyl-CoA = N(6)-biotinyl-L-lysyl-[protein] + malonyl-CoA. Its pathway is lipid metabolism; malonyl-CoA biosynthesis; malonyl-CoA from acetyl-CoA: step 1/1. Component of the acetyl coenzyme A carboxylase (ACC) complex. Biotin carboxylase (BC) catalyzes the carboxylation of biotin on its carrier protein (BCCP) and then the CO(2) group is transferred by the transcarboxylase to acetyl-CoA to form malonyl-CoA. This Rhizobium meliloti (strain 1021) (Ensifer meliloti) protein is Acetyl-coenzyme A carboxylase carboxyl transferase subunit beta.